The sequence spans 351 residues: Spindolin (351 aa).

The signal sequence occupies residues 1–20 (MNKFYYICIYINILYVCVSG).

Homodimer; disulfide-linked.

Functionally, this protein is a spindle body protein. The chain is Spindolin from Lepidoptera (butterflies and moths).